Consider the following 252-residue polypeptide: Imidazole glycerol phosphate synthase subunit HisF (252 aa).

Catalysis depends on residues Asp11 and Asp130.

The protein belongs to the HisA/HisF family. Heterodimer of HisH and HisF.

It is found in the cytoplasm. The catalysed reaction is 5-[(5-phospho-1-deoxy-D-ribulos-1-ylimino)methylamino]-1-(5-phospho-beta-D-ribosyl)imidazole-4-carboxamide + L-glutamine = D-erythro-1-(imidazol-4-yl)glycerol 3-phosphate + 5-amino-1-(5-phospho-beta-D-ribosyl)imidazole-4-carboxamide + L-glutamate + H(+). The protein operates within amino-acid biosynthesis; L-histidine biosynthesis; L-histidine from 5-phospho-alpha-D-ribose 1-diphosphate: step 5/9. Its function is as follows. IGPS catalyzes the conversion of PRFAR and glutamine to IGP, AICAR and glutamate. The HisF subunit catalyzes the cyclization activity that produces IGP and AICAR from PRFAR using the ammonia provided by the HisH subunit. This is Imidazole glycerol phosphate synthase subunit HisF from Polynucleobacter asymbioticus (strain DSM 18221 / CIP 109841 / QLW-P1DMWA-1) (Polynucleobacter necessarius subsp. asymbioticus).